Consider the following 645-residue polypeptide: Homeobox protein B-H2 (645 aa).

Disordered regions lie at residues 1–50 (MTTM…TTAT), 86–134 (SSGG…QAAL), 149–176 (RERE…AHHP), 240–259 (SHLS…HDER), 265–385 (MLQQ…KART), and 553–645 (GAQQ…ALEV). Residues 18–29 (SAPSATAHHPAA) show a composition bias toward low complexity. Residues 106–121 (QHHHHHQQQQQHHHHQ) show a composition bias toward basic residues. Positions 122–134 (QQQQQQQHQQAAL) are enriched in low complexity. The segment covering 149–165 (REREREREREHYRERHS) has biased composition (basic and acidic residues). Residues 244–253 (HQQHHPHLHH) show a composition bias toward basic residues. The span at 275–316 (NNNNNNNNSSSASNNNNNNNNSASANSNIISGNSSSSNNNNG) shows a compositional bias: low complexity. Positions 317–328 (SGNGNMLLGGPG) are enriched in gly residues. The segment covering 329–339 (SSISGDQASTI) has biased composition (polar residues). The span at 362–377 (SSANGDSSSHLSLSLS) shows a compositional bias: low complexity. The segment at residues 380 to 439 (QRKARTAFTDHQLQTLEKSFERQKYLSVQDRMELANKLELSDCQVKTWYQNRRTKWKRQT) is a DNA-binding region (homeobox). Low complexity predominate over residues 553–574 (GAQQQQQQPPAASRSPATSQSA). The span at 583–592 (TSSSSRQRLI) shows a compositional bias: polar residues. Phosphothreonine is present on Thr-593. A compositionally biased stretch (pro residues) spans 594-603 (PSPPLNPGSP). Phosphoserine occurs at positions 595 and 602. Basic and acidic residues predominate over residues 618-632 (DEERDIERERERERE). Residues 633-645 (RDEDDEEELALEV) show a composition bias toward acidic residues.

This sequence belongs to the Antp homeobox family. In terms of tissue distribution, B-H1 and B-H2 are abundant in the eye-antenna imaginal disk. Expressed in R1 and R6 cells throughout larval stage until 30 hours after puparium formation, at which time expression is seen in the anterior and posterior primary pigment cells. Coexpressed in embryonic glial cells, neurons of the CNS and PNS, most latitudinal anterior cells of the developing notum and the central circular region of the leg and antennal imaginal disk throughout larval development.

It localises to the nucleus. B-H1 and B-H2 are regulated by members of the wg signaling pathway; wg and dpp. B-H1 and B-H2 are coexpressed and functionally required in R1 and R6 receptor cells and primary pigment cells for normal eye development. Coexpression is also required for the fate determination of external sensory organs, formation of notal microchaetae, formation of presutural macrochaetae, antennal development and for distal leg morphogenesis; segmentation and specification of tarsal segments 3-5. The protein is Homeobox protein B-H2 (B-H2) of Drosophila melanogaster (Fruit fly).